Consider the following 82-residue polypeptide: Progonadoliberin-3 (82 aa).

A signal peptide spans 1 to 23 (MDLSNRTVVQVVVLALVAQVTLS). Q24 carries the post-translational modification Pyrrolidone carboxylic acid. G33 carries the post-translational modification Glycine amide.

Belongs to the GnRH family. In terms of tissue distribution, brain.

It localises to the secreted. Functionally, stimulates the secretion of gonadotropins. In Oncorhynchus nerka (Sockeye salmon), this protein is Progonadoliberin-3 (gnrh3).